A 765-amino-acid chain; its full sequence is Membrane metallo-endopeptidase-like 1 (765 aa).

Topologically, residues 1 to 19 are cytoplasmic; that stretch reads MVERAGWCRKKSPGFVEYG. Residues 20-40 traverse the membrane as a helical; Signal-anchor for type II membrane protein segment; sequence LMVLLLLLLGAIVTLGVFYSI. The Lumenal portion of the chain corresponds to 41-765; it reads GKQLPLLTSL…MHPMKRCRIW (725 aa). Positions 74 to 765 constitute a Peptidase M13 domain; the sequence is ICTTPSCVIA…MHPMKRCRIW (692 aa). 5 disulfides stabilise this stretch: C75/C80, C98/C750, C106/C710, C161/C425, and C636/C762. Position 121 (R121) interacts with a peptide. N-linked (GlcNAc...) asparagine glycosylation is found at N163, N279, N303, and N336. The stretch at 523–549 forms a coiled coil; that stretch reads FENGLQNLKNNAQRSLKKLREKVDQNL. H599 provides a ligand contact to Zn(2+). E600 is an active-site residue. H603 and E662 together coordinate Zn(2+). D666 serves as the catalytic Proton donor. A glycan (N-linked (GlcNAc...) asparagine) is linked at N694.

This sequence belongs to the peptidase M13 family. It depends on Zn(2+) as a cofactor. N-glycosylated. As to expression, highly expressed in testis. Also expressed in ovary. Weakly or not expressed in brain, lung, heart, liver, kidney, adrenal gland and intestine.

The protein localises to the membrane. The protein resides in the secreted. It catalyses the reaction Preferential cleavage of polypeptides between hydrophobic residues, particularly with Phe or Tyr at P1'.. Its activity is regulated as follows. Inhibited by thiorphan and phosphoramidon. Functionally, metalloprotease involved in sperm function, possibly by modulating the processes of fertilization and early embryonic development. Degrades a broad variety of small peptides with a preference for peptides shorter than 3 kDa containing neutral bulky aliphatic or aromatic amino acid residues. Shares the same substrate specificity with MME and cleaves peptides at the same amide bond. In Mus musculus (Mouse), this protein is Membrane metallo-endopeptidase-like 1 (Mmel1).